We begin with the raw amino-acid sequence, 146 residues long: Probable NADH dehydrogenase [ubiquinone] 1 alpha subcomplex subunit 12 (146 aa).

The protein belongs to the complex I NDUFA12 subunit family. In terms of assembly, complex I is composed of 45 different subunits.

The protein localises to the mitochondrion inner membrane. In terms of biological role, accessory subunit of the mitochondrial membrane respiratory chain NADH dehydrogenase (Complex I), that is believed not to be involved in catalysis. Complex I functions in the transfer of electrons from NADH to the respiratory chain. The immediate electron acceptor for the enzyme is believed to be ubiquinone. The protein is Probable NADH dehydrogenase [ubiquinone] 1 alpha subcomplex subunit 12 of Caenorhabditis elegans.